A 299-amino-acid polypeptide reads, in one-letter code: Protoheme IX farnesyltransferase (299 aa).

The next 9 helical transmembrane spans lie at 25–45 (VVLL…RAGV), 47–67 (WTVL…AAAV), 95–115 (AAAI…LLLF), 119–139 (LAAW…TGFL), 147–167 (IVIG…AVTG), 173–193 (PLLL…ALAI), 218–238 (VHIL…YAIH), 243–263 (LYLV…WVLY), and 279–299 (IWYL…LLNI).

Belongs to the UbiA prenyltransferase family. Protoheme IX farnesyltransferase subfamily.

Its subcellular location is the cell inner membrane. The enzyme catalyses heme b + (2E,6E)-farnesyl diphosphate + H2O = Fe(II)-heme o + diphosphate. The protein operates within porphyrin-containing compound metabolism; heme O biosynthesis; heme O from protoheme: step 1/1. Its function is as follows. Converts heme B (protoheme IX) to heme O by substitution of the vinyl group on carbon 2 of heme B porphyrin ring with a hydroxyethyl farnesyl side group. This is Protoheme IX farnesyltransferase from Ectopseudomonas mendocina (strain ymp) (Pseudomonas mendocina).